We begin with the raw amino-acid sequence, 375 residues long: Alcohol dehydrogenase 1A (375 aa).

Gly1 carries the post-translational modification N-acetylglycine. Zn(2+) contacts are provided by Cys46, His67, Cys97, Cys100, Cys103, Cys111, and Cys174. NAD(+) contacts are provided by residues 199–204 (GLGGVG), Asp223, Lys228, 293–295 (VGL), and Arg370.

This sequence belongs to the zinc-containing alcohol dehydrogenase family. Class-I subfamily. As to quaternary structure, multimeric (with different ratios of monomers). Requires Zn(2+) as cofactor.

Its subcellular location is the cytoplasm. The enzyme catalyses a primary alcohol + NAD(+) = an aldehyde + NADH + H(+). It catalyses the reaction a secondary alcohol + NAD(+) = a ketone + NADH + H(+). In Saara hardwickii (Indian spiny-tailed lizard), this protein is Alcohol dehydrogenase 1A.